A 599-amino-acid polypeptide reads, in one-letter code: Elongation factor 4 (599 aa).

Residues Lys-3 to Ser-185 enclose the tr-type G domain. Residues Asp-15 to Thr-20 and Asn-132 to Asp-135 contribute to the GTP site.

The protein belongs to the TRAFAC class translation factor GTPase superfamily. Classic translation factor GTPase family. LepA subfamily.

Its subcellular location is the cell membrane. The catalysed reaction is GTP + H2O = GDP + phosphate + H(+). Required for accurate and efficient protein synthesis under certain stress conditions. May act as a fidelity factor of the translation reaction, by catalyzing a one-codon backward translocation of tRNAs on improperly translocated ribosomes. Back-translocation proceeds from a post-translocation (POST) complex to a pre-translocation (PRE) complex, thus giving elongation factor G a second chance to translocate the tRNAs correctly. Binds to ribosomes in a GTP-dependent manner. In Syntrophomonas wolfei subsp. wolfei (strain DSM 2245B / Goettingen), this protein is Elongation factor 4.